We begin with the raw amino-acid sequence, 367 residues long: Methylated-thiol--coenzyme M methyltransferase (367 aa).

Zn(2+) contacts are provided by His236, Cys238, and Cys313.

Belongs to the uroporphyrinogen decarboxylase family. In terms of assembly, homodimer. It depends on Zn(2+) as a cofactor.

The catalysed reaction is methanethiol + coenzyme M = methyl-coenzyme M + hydrogen sulfide + H(+). Functionally, methyltransferase involved in methanogenesis from methylated-thiols. Catalyzes two successive steps: mediates the transfer of a methyl group from the substrate to the cobalt cofactor of a methylated-thiol-specific corrinoid protein (MtsB), and the subsequent transfer of the methyl group from the corrinoid protein to coenzyme M. The chain is Methylated-thiol--coenzyme M methyltransferase (mtsA) from Methanosarcina mazei (strain ATCC BAA-159 / DSM 3647 / Goe1 / Go1 / JCM 11833 / OCM 88) (Methanosarcina frisia).